Consider the following 411-residue polypeptide: Thyroxine-binding globulin (411 aa).

Residues 1–15 (MPLFSLVLLILGLHC) form the signal peptide. 4 N-linked (GlcNAc...) asparagine glycosylation sites follow: asparagine 34, asparagine 97, asparagine 163, and asparagine 251. Positions 291 and 394 each coordinate thyroxine.

Belongs to the serpin family. Expressed by the liver and secreted in plasma.

It localises to the secreted. Functionally, major thyroid hormone transport protein in serum. This is Thyroxine-binding globulin (SERPINA7) from Bos taurus (Bovine).